The primary structure comprises 1061 residues: Lysine-specific demethylase jmjd-3.1 (1061 aa).

Disordered stretches follow at residues 30 to 49 and 256 to 417; these read VKNS…MRPV and KSLS…KRRT. The span at 271 to 287 shows a compositional bias: polar residues; the sequence is QHTNSVGSSIGTTSGDS. Low complexity predominate over residues 310 to 320; the sequence is STSSEFTETTS. The span at 321-330 shows a compositional bias: polar residues; it reads VANQTESNAG. The tract at residues 369-417 is required for nuclear localization; that stretch reads KKKEQSATEPPIPRTKRAYTKNPNTIRKRRMKKNQSDDEEDDGPPKRRT. Residues 418-759 are required for binding of unc-3 and for function in Y-to-PDA transdifferentiation; sequence INYQIEFRDA…FGTNIDLLSE (342 aa). A JmjC domain is found at 760 to 923; it reads NFKKQMNEIE…LATSIVAHDH (164 aa). 3 residues coordinate Fe cation: His811, Glu813, and His891. The Zn(2+) site is built by Cys998, Cys1001, Cys1025, and Cys1028.

This sequence belongs to the UTX family. As to quaternary structure, interacts with wdr-5.1 and unc-3. It depends on Fe(2+) as a cofactor. Mainly expressed in head and tail.

It localises to the nucleus. Its function is as follows. Histone demethylase that specifically demethylates trimethylated 'Lys-27' of histone H3, a mark associated with transcriptional repression, thereby playing a central role in the histone code. Involved in the transcriptional regulation of the heat shock response, unfolded protein response and possibly other stress response target genes. Required for gonad development and organization. Required for the robust transdifferentiation of the Y rectal epithelial cell to the PDA motor neuron during larval development. Acts cell-autonomously in Y-to-PDA transdifferentiation, which depends on the demethylase activity and on recognition of the H3 tail. Cooperates with set-2 and unc-3 to ensure robust Y-to-PDA transdifferentiation. Promotes mitochondrial stress-induced longevity. Involved in lifespan regulation. In Caenorhabditis elegans, this protein is Lysine-specific demethylase jmjd-3.1.